Consider the following 403-residue polypeptide: Argininosuccinate synthase (403 aa).

Residue 9 to 17 (AYSGGLDTS) participates in ATP binding. An L-citrulline-binding site is contributed by Y86. G116 contacts ATP. Positions 118, 122, and 123 each coordinate L-aspartate. N122 is an L-citrulline binding site. The L-citrulline site is built by R126, S174, S183, E259, and Y271.

This sequence belongs to the argininosuccinate synthase family. Type 1 subfamily. As to quaternary structure, homotetramer.

Its subcellular location is the cytoplasm. It catalyses the reaction L-citrulline + L-aspartate + ATP = 2-(N(omega)-L-arginino)succinate + AMP + diphosphate + H(+). Its pathway is amino-acid biosynthesis; L-arginine biosynthesis; L-arginine from L-ornithine and carbamoyl phosphate: step 2/3. The protein is Argininosuccinate synthase of Shouchella clausii (strain KSM-K16) (Alkalihalobacillus clausii).